A 397-amino-acid chain; its full sequence is Mesoderm posterior protein 2 (397 aa).

4 disordered regions span residues 28–92, 152–208, 222–295, and 351–376; these read WDST…REKL, QRGD…GRRP, SPSA…VPWT, and PNSE…SGLR. 2 stretches are compositionally biased toward low complexity: residues 32-48 and 58-71; these read SPAS…CDGA and SCSS…ATTP. Positions 81–135 constitute a bHLH domain; that stretch reads GQRQSASEREKLRMRTLARALHELRRFLPPSLAPAGQSLTKIETLRLAIRYIGHL. 13 tandem repeats follow at residues 179-180, 181-182, 183-184, 185-186, 187-188, 189-190, 191-192, 193-194, 195-196, 197-198, 199-200, 201-202, and 203-204. Positions 179–204 are 13 X 2 AA tandem repeats of G-Q; sequence GQGQGQGQGQGQGQGQGQGQGQGQGQ. The span at 180 to 206 shows a compositional bias: gly residues; that stretch reads QGQGQGQGQGQGQGQGQGQGQGQGQGR. The span at 235–244 shows a compositional bias: basic and acidic residues; sequence RLGRGVHDTD. Polar residues-rich tracts occupy residues 258 to 270 and 365 to 375; these read PPYS…SDAS and SEASPPQSSGL.

Post-translationally, degraded by the proteasome.

The protein localises to the nucleus. In terms of biological role, transcription factor with important role in somitogenesis. Defines the rostrocaudal patterning of the somite by participating in distinct Notch pathways. Also regulates the FGF signaling pathway. Specifies the rostral half of the somites. Generates rostro-caudal polarity of somites by down-regulating in the presumptive rostral domain DLL1, a Notch ligand. Participates in the segment border formation by activating in the anterior presomitic mesoderm LFNG, a negative regulator of DLL1-Notch signaling. Acts as a strong suppressor of Notch activity. Together with MESP1 is involved in the epithelialization of somitic mesoderm and in the development of cardiac mesoderm. This is Mesoderm posterior protein 2 (MESP2) from Homo sapiens (Human).